The following is a 473-amino-acid chain: tRNA-2-methylthio-N(6)-dimethylallyladenosine synthase (473 aa).

The region spanning 5 to 125 (RKLHIKSFGC…LPQLLAEAAR (121 aa)) is the MTTase N-terminal domain. 6 residues coordinate [4Fe-4S] cluster: Cys-14, Cys-50, Cys-88, Cys-166, Cys-170, and Cys-173. A Radical SAM core domain is found at 152-384 (RARGISAFVT…QELIDSQQAA (233 aa)). A TRAM domain is found at 387–449 (AAVIGTTVEV…RYSLIGELAA (63 aa)). Residues 452–473 (QHSGFATRSEDSPQSLPITTGA) form a disordered region.

Belongs to the methylthiotransferase family. MiaB subfamily. Monomer. [4Fe-4S] cluster serves as cofactor.

The protein resides in the cytoplasm. It catalyses the reaction N(6)-dimethylallyladenosine(37) in tRNA + (sulfur carrier)-SH + AH2 + 2 S-adenosyl-L-methionine = 2-methylsulfanyl-N(6)-dimethylallyladenosine(37) in tRNA + (sulfur carrier)-H + 5'-deoxyadenosine + L-methionine + A + S-adenosyl-L-homocysteine + 2 H(+). Catalyzes the methylthiolation of N6-(dimethylallyl)adenosine (i(6)A), leading to the formation of 2-methylthio-N6-(dimethylallyl)adenosine (ms(2)i(6)A) at position 37 in tRNAs that read codons beginning with uridine. The chain is tRNA-2-methylthio-N(6)-dimethylallyladenosine synthase from Rhodopseudomonas palustris (strain BisB18).